Here is a 78-residue protein sequence, read N- to C-terminus: MGSLSIWHWIVVIGVVLLLFGRGKISDLMGDVAQGIKSFKKGLQDDEKTAEKPEPVKSIDHTAPPAAAPRTDVGSKVV.

A helical membrane pass occupies residues 1-21 (MGSLSIWHWIVVIGVVLLLFG). Positions 42 to 60 (GLQDDEKTAEKPEPVKSID) are enriched in basic and acidic residues. The segment at 42-78 (GLQDDEKTAEKPEPVKSIDHTAPPAAAPRTDVGSKVV) is disordered.

It belongs to the TatA/E family. In terms of assembly, the Tat system comprises two distinct complexes: a TatABC complex, containing multiple copies of TatA, TatB and TatC subunits, and a separate TatA complex, containing only TatA subunits. Substrates initially bind to the TatABC complex, which probably triggers association of the separate TatA complex to form the active translocon.

It localises to the cell inner membrane. Functionally, part of the twin-arginine translocation (Tat) system that transports large folded proteins containing a characteristic twin-arginine motif in their signal peptide across membranes. TatA could form the protein-conducting channel of the Tat system. The sequence is that of Sec-independent protein translocase protein TatA from Rhodopseudomonas palustris (strain BisB18).